Consider the following 617-residue polypeptide: MASKGGLKTIANEENEERFGYVFAVSGPVVTAEKMSGSAMYELVRVGYNELVGEIIRLEGDMATIQVYEETSGVTVGDPVLRTGKPLSVELGPGILGSIFDGIQRPLKDINELTQSIYIPKGVNVPSLAREVDWEFNPLNVKVGSHITGGDLYGIVHENTLVKHKMLMPPRAKGTVTYIAPAGNYKVTDVVLETEFDGEKAQYTMLQVWPVRQPRPVTEKLPANHPLLTGQRVLDSLFPCVQGGTTAIPGAFGCGKTVISQALSKYSNSDVIIYVGCGERGNEMSEVLRDFPELTVEIEGVTESIMKRTALVANTSNMPVAAREASIYTGITLSEYFRDMGYNVSMMADSTSRWAEALREISGRLAEMPADSGYPAYLGARLASFYERAGRVKCLGNPDREGSVSIVGAVSPPGGDFSDPVTAATLGIVQVFWGLDKKLAQRKHFPSINWLISYSKYMRALDDFYEKNYPEFVPLRTKVKEILQEEEDLSEIVQLVGKASLAETDKITLEVAKLLKDDFLQQNSYSSYDRFCPFYKTVGMLKNIISFYDMSRHAVESTAQSDNKVTWNVIRDAMGNVLYQLSSMKFKDPVKDGEAKIKADFDQLLEDMSAAFRNLED.

Residue 250 to 257 (GAFGCGKT) participates in ATP binding.

Belongs to the ATPase alpha/beta chains family. V-ATPase is a heteromultimeric enzyme made up of two complexes: the ATP-hydrolytic V1 complex and the proton translocation V0 complex. The V1 complex consists of three catalytic AB heterodimers that form a heterohexamer, three peripheral stalks each consisting of EG heterodimers, one central rotor including subunits D and F, and the regulatory subunits C and H. The proton translocation complex V0 consists of the proton transport subunit a, a ring of proteolipid subunits c9c'', rotary subunit d, subunits e and f, and the accessory subunits VhaAC45 and ATP6AP2.

The enzyme catalyses ATP + H2O + 4 H(+)(in) = ADP + phosphate + 5 H(+)(out). Its activity is regulated as follows. ATP hydrolysis occurs at the interface between the nucleotide-binding domains of subunits A and B. ATP hydrolysis triggers a conformational change in the subunits D and F, which induces a shift of subunit d. The c-ring is subsequently rotated and results in a continuous proton translocation across the membrane. Its function is as follows. Catalytic subunit of the V1 complex of vacuolar(H+)-ATPase (V-ATPase), a multisubunit enzyme composed of a peripheral complex (V1) that hydrolyzes ATP and a membrane integral complex (V0) that translocates protons. V-ATPase is responsible for acidifying and maintaining the pH of intracellular compartments and in some cell types, is targeted to the plasma membrane, where it is responsible for acidifying the extracellular environment. This chain is V-type proton ATPase catalytic subunit A (VHAA), found in Manduca sexta (Tobacco hawkmoth).